The sequence spans 39 residues: Conotoxin ArMSGL-013 (39 aa).

A propeptide spanning residues 1–5 is cleaved from the precursor; the sequence is RRSLT. Intrachain disulfides connect C12–C24, C16–C33, and C23–C37. The residue at position 38 (W38) is a Tryptophan amide.

It belongs to the conotoxin O3 superfamily. As to expression, expressed by the venom duct.

Its subcellular location is the secreted. This chain is Conotoxin ArMSGL-013, found in Conus arenatus (Sand-dusted cone).